The following is an 89-amino-acid chain: Small ribosomal subunit protein uS15 (89 aa).

Belongs to the universal ribosomal protein uS15 family. As to quaternary structure, part of the 30S ribosomal subunit. Forms a bridge to the 50S subunit in the 70S ribosome, contacting the 23S rRNA.

Functionally, one of the primary rRNA binding proteins, it binds directly to 16S rRNA where it helps nucleate assembly of the platform of the 30S subunit by binding and bridging several RNA helices of the 16S rRNA. Forms an intersubunit bridge (bridge B4) with the 23S rRNA of the 50S subunit in the ribosome. In Yersinia pseudotuberculosis serotype O:1b (strain IP 31758), this protein is Small ribosomal subunit protein uS15.